The chain runs to 254 residues: Insulin-like growth factor-binding protein 4 (254 aa).

Residues methionine 1–glycine 21 form the signal peptide. In terms of domain architecture, IGFBP N-terminal spans glutamate 23–leucine 103. 6 disulfide bridges follow: cysteine 27–cysteine 53, cysteine 30–cysteine 55, cysteine 38–cysteine 56, cysteine 44–cysteine 59, cysteine 67–cysteine 80, and cysteine 74–cysteine 100. Asparagine 125 carries an N-linked (GlcNAc...) asparagine glycan. A disulfide bond links cysteine 131 and cysteine 138. The tract at residues arginine 149 to serine 169 is disordered. In terms of domain architecture, Thyroglobulin type-1 spans glutamine 167–cysteine 245. Intrachain disulfides connect cysteine 170–cysteine 200, cysteine 211–cysteine 222, and cysteine 224–cysteine 245. Residue serine 251 is modified to Phosphoserine.

Binds IGF2 more than IGF1.

It localises to the secreted. Its function is as follows. IGF-binding proteins prolong the half-life of the IGFs and have been shown to either inhibit or stimulate the growth promoting effects of the IGFs on cell culture. They alter the interaction of IGFs with their cell surface receptors. In Rattus norvegicus (Rat), this protein is Insulin-like growth factor-binding protein 4 (Igfbp4).